Here is a 163-residue protein sequence, read N- to C-terminus: Large ribosomal subunit protein bL17 (163 aa).

The tract at residues 127–163 (VAKKATRTRRSKKSAEAAAPAAVEAPATEEPKAESAE) is disordered. Basic residues predominate over residues 129 to 138 (KKATRTRRSK). Residues 142–154 (EAAAPAAVEAPAT) are compositionally biased toward low complexity.

It belongs to the bacterial ribosomal protein bL17 family. Part of the 50S ribosomal subunit. Contacts protein L32.

The chain is Large ribosomal subunit protein bL17 from Bacteroides thetaiotaomicron (strain ATCC 29148 / DSM 2079 / JCM 5827 / CCUG 10774 / NCTC 10582 / VPI-5482 / E50).